The sequence spans 228 residues: 2,3-bisphosphoglycerate-dependent phosphoglycerate mutase (228 aa).

Residues 8–15, 21–22, Arg58, 111–114, Lys122, 138–139, and 182–183 each bind substrate; these read RHGQSVWN, SG, ERMY, RR, and GN. The active-site Tele-phosphohistidine intermediate is His9. The Proton donor/acceptor role is filled by Glu111.

Belongs to the phosphoglycerate mutase family. BPG-dependent PGAM subfamily.

It carries out the reaction (2R)-2-phosphoglycerate = (2R)-3-phosphoglycerate. Its pathway is carbohydrate degradation; glycolysis; pyruvate from D-glyceraldehyde 3-phosphate: step 3/5. In terms of biological role, catalyzes the interconversion of 2-phosphoglycerate and 3-phosphoglycerate. This Chlamydia pneumoniae (Chlamydophila pneumoniae) protein is 2,3-bisphosphoglycerate-dependent phosphoglycerate mutase.